Reading from the N-terminus, the 80-residue chain is Sulfur carrier protein TusA (80 aa).

Cys-17 serves as the catalytic Cysteine persulfide intermediate.

Belongs to the sulfur carrier protein TusA family.

It localises to the cytoplasm. Functionally, sulfur carrier protein which probably makes part of a sulfur-relay system. The protein is Sulfur carrier protein TusA of Pseudomonas entomophila (strain L48).